The sequence spans 185 residues: Large ribosomal subunit protein uL5 (185 aa).

It belongs to the universal ribosomal protein uL5 family. As to quaternary structure, part of the 50S ribosomal subunit; part of the 5S rRNA/L5/L18/L25 subcomplex. Contacts the 5S rRNA and the P site tRNA. Forms a bridge to the 30S subunit in the 70S ribosome.

Its function is as follows. This is one of the proteins that bind and probably mediate the attachment of the 5S RNA into the large ribosomal subunit, where it forms part of the central protuberance. In the 70S ribosome it contacts protein S13 of the 30S subunit (bridge B1b), connecting the 2 subunits; this bridge is implicated in subunit movement. Contacts the P site tRNA; the 5S rRNA and some of its associated proteins might help stabilize positioning of ribosome-bound tRNAs. The protein is Large ribosomal subunit protein uL5 of Bartonella quintana (strain Toulouse) (Rochalimaea quintana).